Consider the following 366-residue polypeptide: tRNA/tmRNA (uracil-C(5))-methyltransferase (366 aa).

Residues Gln190, Tyr218, Asn223, Glu239, and Asp299 each coordinate S-adenosyl-L-methionine. The active-site Nucleophile is the Cys324. Glu358 functions as the Proton acceptor in the catalytic mechanism.

It belongs to the class I-like SAM-binding methyltransferase superfamily. RNA M5U methyltransferase family. TrmA subfamily.

The catalysed reaction is uridine(54) in tRNA + S-adenosyl-L-methionine = 5-methyluridine(54) in tRNA + S-adenosyl-L-homocysteine + H(+). It carries out the reaction uridine(341) in tmRNA + S-adenosyl-L-methionine = 5-methyluridine(341) in tmRNA + S-adenosyl-L-homocysteine + H(+). In terms of biological role, dual-specificity methyltransferase that catalyzes the formation of 5-methyluridine at position 54 (m5U54) in all tRNAs, and that of position 341 (m5U341) in tmRNA (transfer-mRNA). The polypeptide is tRNA/tmRNA (uracil-C(5))-methyltransferase (Cellvibrio japonicus (strain Ueda107) (Pseudomonas fluorescens subsp. cellulosa)).